Reading from the N-terminus, the 123-residue chain is MARIAGIDLPRDKRIVIGLTYIYGIGNTTAQKVLAEAGVSEDVRVRDLTSDQEDAIRATVDKLNLQLEGDLRRKVSLDIKSLQEIASYRGIRHRKGLPVRGQNTKNNARTRKGPAKAIAGKKK.

Residues 93-123 form a disordered region; it reads HRKGLPVRGQNTKNNARTRKGPAKAIAGKKK. The span at 108–123 shows a compositional bias: basic residues; sequence ARTRKGPAKAIAGKKK.

This sequence belongs to the universal ribosomal protein uS13 family. Part of the 30S ribosomal subunit. Forms a loose heterodimer with protein S19. Forms two bridges to the 50S subunit in the 70S ribosome.

In terms of biological role, located at the top of the head of the 30S subunit, it contacts several helices of the 16S rRNA. In the 70S ribosome it contacts the 23S rRNA (bridge B1a) and protein L5 of the 50S subunit (bridge B1b), connecting the 2 subunits; these bridges are implicated in subunit movement. Contacts the tRNAs in the A and P-sites. This is Small ribosomal subunit protein uS13 from Leuconostoc mesenteroides subsp. mesenteroides (strain ATCC 8293 / DSM 20343 / BCRC 11652 / CCM 1803 / JCM 6124 / NCDO 523 / NBRC 100496 / NCIMB 8023 / NCTC 12954 / NRRL B-1118 / 37Y).